The sequence spans 294 residues: Potassium-transporting ATPase subunit beta (294 aa).

The Cytoplasmic portion of the chain corresponds to methionine 1–arginine 36. A helical; Signal-anchor for type II membrane protein transmembrane segment spans residues tryptophan 37 to leucine 57. Over cysteine 58–lysine 294 the chain is Extracellular. N-linked (GlcNAc...) asparagine glycans are attached at residues asparagine 99, asparagine 103, asparagine 130, asparagine 146, and asparagine 161. Cysteine 131 and cysteine 152 are joined by a disulfide. Cysteines 162 and 178 form a disulfide. N-linked (GlcNAc...) asparagine glycans are attached at residues asparagine 193 and asparagine 225. Residues asparagine 194–lysine 294 are immunoglobulin-like. Cysteine 201 and cysteine 266 are oxidised to a cystine.

Belongs to the X(+)/potassium ATPases subunit beta family. As to quaternary structure, the ATPase pump is composed of two subunits: alpha (catalytic) and beta (regulatory). Interacts with alpha subunit ATP12A; this interaction is required for the formation of a functionally active pump and targeting at the plasma membrane. Interacts (via N-terminus) with alpha subunit ATP4A (via the P-domain). N-glycosylation is necessary for assembly and functional expression of the pump at the plasma membrane. In terms of tissue distribution, expressed in parietal cells (at protein level).

It is found in the apical cell membrane. Its subcellular location is the cell membrane. The beta subunit of the gastric H(+)/K(+) ATPase pump which transports H(+) ions in exchange for K(+) ions across the apical membrane of parietal cells. Plays a structural and regulatory role in the assembly and membrane targeting of a functionally active pump. Within a transport cycle, the transfer of a H(+) ion across the membrane is coupled to ATP hydrolysis and is associated with a transient phosphorylation of the alpha subunit that shifts the pump conformation from inward-facing (E1) to outward-facing state (E2). Interacts with the phosphorylation domain of the alpha subunit and functions as a ratchet, stabilizing the lumenal-open E2 conformation and preventing the reverse reaction of the transport cycle. This chain is Potassium-transporting ATPase subunit beta (Atp4b), found in Mus musculus (Mouse).